The primary structure comprises 217 residues: Pyrophosphatase PpaX (217 aa).

The Nucleophile role is filled by Asp11.

This sequence belongs to the HAD-like hydrolase superfamily. PpaX family. The cofactor is Mg(2+).

It carries out the reaction diphosphate + H2O = 2 phosphate + H(+). Functionally, hydrolyzes pyrophosphate formed during P-Ser-HPr dephosphorylation by HPrK/P. Might play a role in controlling the intracellular pyrophosphate pool. The chain is Pyrophosphatase PpaX from Listeria innocua serovar 6a (strain ATCC BAA-680 / CLIP 11262).